A 477-amino-acid polypeptide reads, in one-letter code: 3-isopropylmalate dehydratase large subunit (477 aa).

Residues cysteine 352, cysteine 413, and cysteine 416 each contribute to the [4Fe-4S] cluster site.

This sequence belongs to the aconitase/IPM isomerase family. LeuC type 1 subfamily. As to quaternary structure, heterodimer of LeuC and LeuD. [4Fe-4S] cluster is required as a cofactor.

It carries out the reaction (2R,3S)-3-isopropylmalate = (2S)-2-isopropylmalate. Its pathway is amino-acid biosynthesis; L-leucine biosynthesis; L-leucine from 3-methyl-2-oxobutanoate: step 2/4. Catalyzes the isomerization between 2-isopropylmalate and 3-isopropylmalate, via the formation of 2-isopropylmaleate. In Pseudomonas putida (strain GB-1), this protein is 3-isopropylmalate dehydratase large subunit.